A 140-amino-acid chain; its full sequence is uncharacterized protein (140 aa).

The protein belongs to the SufE family.

This is an uncharacterized protein from Rhizobium meliloti (strain 1021) (Ensifer meliloti).